The chain runs to 3423 residues: Genome polyprotein (3423 aa).

The disordered stretch occupies residues 1-25 (MKNPKKKSGGFRIVNMLKRGVARVS). Topologically, residues 1–104 (MKNPKKKSGG…INARKEKKRR (104 aa)) are cytoplasmic. A hydrophobic; homodimerization of capsid protein C region spans residues 37-72 (LLLGHGPIRMVLAILAFLRFTAIKPSLGLINRWGSV). Residues 105–122 (GTDTSVGIVGLLLTTAMA) constitute a propeptide, ER anchor for capsid protein C, removed in mature form by serine protease NS3. Residues 105–125 (GTDTSVGIVGLLLTTAMAVEV) traverse the membrane as a helical segment. Topologically, residues 126 to 249 (TRRGNAYYMY…YTKHLIRVEN (124 aa)) are extracellular. N-linked (GlcNAc...) asparagine; by host glycosylation occurs at Asn-192. A helical transmembrane segment spans residues 250 to 269 (WIFRNPGFALAAAAIAWLLG). The Cytoplasmic portion of the chain corresponds to 270–274 (SSTSQ). A helical transmembrane segment spans residues 275-290 (KVIYLVMILLIAPAYS). Topologically, residues 291 to 745 (IRCIGVSNRD…HQIFGAAFKS (455 aa)) are extracellular. A Glycyl lysine isopeptide (Lys-Gly) (interchain with G-Cter in ubiquitin) cross-link involves residue Lys-328. Intrachain disulfides connect Cys-350-Cys-406 and Cys-382-Cys-411. Positions 388-401 (DRGWGNGCGLFGKG) are fusion peptide. An N-linked (GlcNAc...) asparagine; by host glycan is attached at Asn-444. 2 disulfides stabilise this stretch: Cys-480/Cys-581 and Cys-598/Cys-629. Residue Lys-571 forms a Glycyl lysine isopeptide (Lys-Gly) (interchain with G-Cter in ubiquitin) linkage. The chain crosses the membrane as a helical span at residues 746 to 767 (LFGGMSWFSQILIGTLLVWLGL). Over 768–773 (NTKNGS) the chain is Cytoplasmic. The chain crosses the membrane as a helical span at residues 774–794 (ISLMCLALGGVLIFLSTAVSA). The Lumenal segment spans residues 795–1177 (DVGCSVDFSK…EGLKKRMTTK (383 aa)). Cystine bridges form between Cys-798–Cys-809, Cys-849–Cys-937, Cys-973–Cys-1017, Cys-1074–Cys-1123, Cys-1085–Cys-1106, and Cys-1107–Cys-1110. Residues Asn-924 and Asn-1001 are each glycosylated (N-linked (GlcNAc...) asparagine; by host). Residues 1178–1198 (IIISTSMAVLVAMILGGFSMS) form a helical membrane-spanning segment. At 1199–1220 (DLAKLAILMGATFAEMNTGGDV) the chain is on the cytoplasmic side. A helical membrane pass occupies residues 1221 to 1241 (AHLALIAAFKVRPALLVSFIF). Over 1242 to 1270 (RANWTPRESMLLALASCLLQTAISALEGD) the chain is Lumenal. The chain crosses the membrane as a helical span at residues 1271-1291 (LMVPINGFALAWLAIRAMVVP). Topologically, residues 1292–1295 (RTDN) are cytoplasmic. The helical transmembrane segment at 1296–1316 (ITLAILAALTPLARGTLLVAW) threads the bilayer. The Lumenal segment spans residues 1317–1345 (RAGLATCGGFMLLSLKGKGSVKKNLPFVM). The chain crosses the membrane as a helical span at residues 1346 to 1366 (ALGLTAVRLVDPINVVGLLLL). Residues 1367–1373 (TRSGKRS) are Cytoplasmic-facing. Residues 1374–1394 (WPPSEVLTAVGLICALAGGFA) form a helical membrane-spanning segment. Residues 1395-1397 (KAD) are Lumenal-facing. The chain crosses the membrane as a helical span at residues 1398–1418 (IEMAGPMAAVGLLIVSYVVSG). Topologically, residues 1419–1472 (KSVDMYIERAGDITWEKDAEVTGNSPRLDVALDESGDFSLVEDDGPPMREIILK) are cytoplasmic. Residues 1425–1464 (IERAGDITWEKDAEVTGNSPRLDVALDESGDFSLVEDDGP) are interacts with and activates NS3 protease. The segment at 1429–1451 (GDITWEKDAEVTGNSPRLDVALD) is disordered. The segment at residues 1473 to 1493 (VVLMAICGMNPIAIPFAAGAW) is an intramembrane region (helical). At 1494–2170 (YVYVKTGKRS…KAAAAQLPET (677 aa)) the chain is on the lumenal side. A Peptidase S7 domain is found at 1503 to 1680 (SGALWDVPAP…RREEETPVEC (178 aa)). Catalysis depends on charge relay system; for serine protease NS3 activity residues His-1553, Asp-1577, and Ser-1637. One can recognise a Helicase ATP-binding domain in the interval 1683–1839 (PSMLKKKQLT…DSNSPIMDTE (157 aa)). Residues 1687-1690 (KKKQ) are important for RNA-binding. 1696–1703 (LHPGAGKT) is an ATP binding site. Residues 1787–1790 (DEAH) carry the DEAH box motif. In terms of domain architecture, Helicase C-terminal spans 1834 to 2013 (PIMDTEVEVP…GLIASLYRPE (180 aa)). Lys-1891 carries the post-translational modification N6-acetyllysine; by host. The chain crosses the membrane as a helical span at residues 2171–2191 (LETIMLLGLLGTVSLGIFFVL). Over 2192 to 2195 (MRNK) the chain is Lumenal. Residues 2196-2216 (GIGKMGFGMVTLGASAWLMWL) constitute an intramembrane region (helical). At 2217–2218 (SE) the chain is on the cytoplasmic side. Residues 2219 to 2239 (IEPARIACVLIVVFLLLVVLI) form a helical membrane-spanning segment. At 2240-2254 (PEPEKQRSPQDNQMA) the chain is on the lumenal side. The helical intramembrane region spans 2255–2269 (IIIMVAVGLLGLITA). At 2270–2307 (NELGWLERTKSDLSHLMGRREEGATIGFSMDIDLRPAS) the chain is on the lumenal side. The helical intramembrane region spans 2308–2328 (AWAIYAALTTFITPAVQHAVT). The Lumenal portion of the chain corresponds to 2329–2344 (TSYNNYSLMAMATQAG). The chain crosses the membrane as a helical span at residues 2345–2365 (VLFGMGKGMPFYAWDFGVPLL). The Cytoplasmic portion of the chain corresponds to 2366–2375 (MIGCYSQLTP). A helical membrane pass occupies residues 2376–2396 (LTLIVAIILLVAHYMYLIPGL). The Lumenal segment spans residues 2397–2441 (QAAAARAAQKRTAAGIMKNPVVDGIVVTDIDTMTIDPQVEKKMGQ). Residues 2442 to 2462 (VLLIAVAVSSAILSRTAWGWG) traverse the membrane as a helical segment. Residues 2463–3423 (EAGALITAAT…GEEGSTPGVL (961 aa)) lie on the Cytoplasmic side of the membrane. Positions 2521–2785 (GGGTGETLGE…DVNLGSGTRA (265 aa)) constitute an mRNA cap 0-1 NS5-type MT domain. Residue 2533–2539 (KARLNQM) coordinates GTP. Ser-2576 provides a ligand contact to S-adenosyl-L-methionine. Ser-2576 bears the Phosphoserine mark. Residue Lys-2581 is the For 2'-O-MTase activity of the active site. The segment at 2597–2600 (VIDL) is SUMO-interacting motif (SIM). Positions 2606, 2607, 2624, 2625, 2630, 2631, 2651, 2652, 2666, and 2667 each coordinate S-adenosyl-L-methionine. Asp-2666 (for 2'-O-MTase activity) is an active-site residue. Residue 2669 to 2675 (ESSSSPE) participates in GTP binding. The For 2'-O-MTase activity role is filled by Lys-2702. 2733–2735 (RNS) contacts GTP. The active-site For 2'-O-MTase activity is Glu-2738. Tyr-2740 is an S-adenosyl-L-methionine binding site. The short motif at 2908–2914 (KHKRPRV) is the Nuclear localization signal (NLS) element. Zn(2+) is bound by residues Glu-2959, His-2963, Cys-2968, and Cys-2971. One can recognise a RdRp catalytic domain in the interval 3049–3199 (GRMYADDTAG…KPIDDRFAHA (151 aa)). Zn(2+) is bound by residues His-3234, Cys-3250, and Cys-3369.

The protein in the N-terminal section; belongs to the class I-like SAM-binding methyltransferase superfamily. mRNA cap 0-1 NS5-type methyltransferase family. Homodimer. Interacts with host SERTAD3; this interaction promotes capsid protein C degradation. Interacts with host CAPRIN1; this interaction is probably linked to the inhibition of stress granules formation by the virus. Interacts with host G3BP1; this interaction is probably linked to the inhibition of stress granules formation by the virus. In terms of assembly, forms heterodimers with envelope protein E in the endoplasmic reticulum and Golgi. Interacts with non-structural protein 2A. As to quaternary structure, homodimer; in the endoplasmic reticulum and Golgi. Interacts with host TYRO3, AXL and DC-SIGN proteins. Interacts with non-structural protein 2A. Interacts with host HAVCR1; this interaction likely mediates virus attachment to host cell. Interacts with host NCAM1. Interacts with host HSPA5. Interacts with Aedes aegypti SRPN25, APY and venom allergen-1 salivary proteins; the interactions do not affect Zika virus replication in human endothelial cells and keratinocytes. Homodimer; Homohexamer when secreted. Interacts with host TBK1. Interacts with host USP8. Interacts with envelope protein E. In terms of assembly, interacts with the structural protein prM/E complex, and the NS2B/NS3 protease complex. As to quaternary structure, forms a heterodimer with serine protease NS3. May form homooligomers. Interacts with human SPCS1. Interacts with non-structural protein 2A. Forms a heterodimer with NS2B. Interacts with NS4B. Interacts with unphosphorylated RNA-directed RNA polymerase NS5; this interaction stimulates RNA-directed RNA polymerase NS5 guanylyltransferase activity. Interacts with non-structural protein 2A. Interacts with host SHFL; this interaction promotes NS3 degradation via a lysosome-dependent pathway. Interacts with host CEP63; this interaction disorganizes the centrosome and inhibits host innate immune response. In terms of assembly, may interact with host ANKLE2; the interaction may cause defects in brain development, such as microcephaly. May interact with host SRPRA and SEC61G. As to quaternary structure, interacts with serine protease NS3. Interacts with NS1. Homodimer. Interacts with host STAT2; this interaction inhibits the phosphorylation of the latter, and, when all viral proteins are present (polyprotein), targets STAT2 for degradation. Interacts with host TBK1 and IKBKE; these interactions lead to the inhibition of the host RIG-I signaling pathway. Interacts with host PAF1 complex; the interaction may prevent the recruitment of the host PAF1 complex to interferon-responsive genes, and thus reduces the immune response. Interacts with serine protease NS3. Interacts with host KPNA2. Interacts with host ZSWIM8; this interaction allows STAT2 binding to ZSWIM8 and subsequent proteasomal degradation leading to inhibition of interferon signaling. Post-translationally, specific enzymatic cleavages in vivo yield mature proteins. Cleavages in the lumen of endoplasmic reticulum are performed by host signal peptidase, whereas cleavages in the cytoplasmic side are performed by serine protease NS3. Signal cleavage at the 2K-4B site requires a prior NS3 protease-mediated cleavage at the 4A-2K site. Cleaved in post-Golgi vesicles by a host furin, releasing the mature small envelope protein M, and peptide pr. This cleavage is incomplete as up to 30% of viral particles still carry uncleaved prM. In terms of processing, N-glycosylation plays a role in virulence in mammalian and mosquito hosts, but may have no effect on neurovirulence. Post-translationally, ubiquitination by host TRIM7 promotes virus attachment and fusion of the virus and the host endosome membrane. N-glycosylated. The excreted form is glycosylated, which is required for efficient secretion of the protein from infected cells. In terms of processing, ubiquitination by host TRIM22 leads to proteasomal degradation. Post-translationally, acetylated by host KAT5. Acetylation modulates NS3 RNA-binding and unwinding activities and plays an important positive role for viral replication. Phosphorylated on serines residues. This phosphorylation may trigger NS5 nuclear localization. In terms of processing, sumoylated, required for regulating IFN induced interferon stimulated genes/ISGs.

It is found in the virion. It localises to the host nucleus. The protein resides in the host cytoplasm. Its subcellular location is the host perinuclear region. The protein localises to the secreted. It is found in the virion membrane. It localises to the host endoplasmic reticulum membrane. The protein resides in the host cell surface. It carries out the reaction a 5'-end (5'-triphosphoguanosine)-ribonucleoside in mRNA + S-adenosyl-L-methionine = a 5'-end (N(7)-methyl 5'-triphosphoguanosine)-ribonucleoside in mRNA + S-adenosyl-L-homocysteine. The catalysed reaction is a 5'-end (N(7)-methyl 5'-triphosphoguanosine)-ribonucleoside in mRNA + S-adenosyl-L-methionine = a 5'-end (N(7)-methyl 5'-triphosphoguanosine)-(2'-O-methyl-ribonucleoside) in mRNA + S-adenosyl-L-homocysteine + H(+). The enzyme catalyses RNA(n) + a ribonucleoside 5'-triphosphate = RNA(n+1) + diphosphate. It catalyses the reaction Selective hydrolysis of -Xaa-Xaa-|-Yaa- bonds in which each of the Xaa can be either Arg or Lys and Yaa can be either Ser or Ala.. It carries out the reaction a ribonucleoside 5'-triphosphate + H2O = a ribonucleoside 5'-diphosphate + phosphate + H(+). The catalysed reaction is ATP + H2O = ADP + phosphate + H(+). In terms of biological role, plays a role in virus budding by binding to the cell membrane and gathering the viral RNA into a nucleocapsid that forms the core of the mature virus particle. During virus entry, may induce genome penetration into the host cytoplasm after hemifusion induced by the surface proteins. Can migrate to the cell nucleus where it modulates host functions. Inhibits the integrated stress response (ISR) in the infected cell. Functionally, inhibits RNA silencing by interfering with host Dicer. Its function is as follows. Prevents premature fusion activity of envelope proteins in trans-Golgi by binding to envelope protein E at pH 6.0. After virion release in extracellular space, gets dissociated from E dimers. Plays a role in host immune defense modulation and protection of envelope protein E during virion synthesis. PrM-E cleavage is inefficient, many virions are only partially matured and immature prM-E proteins could play a role in immune evasion. Contributes to fetal microcephaly in humans. Acts as a chaperone for envelope protein E during intracellular virion assembly by masking and inactivating envelope protein E fusion peptide. prM is the only viral peptide matured by host furin in the trans-Golgi network probably to avoid catastrophic activation of the viral fusion activity in acidic Golgi compartment prior to virion release. In terms of biological role, may play a role in virus budding. Exerts cytotoxic effects by activating a mitochondrial apoptotic pathway through M ectodomain. May display a viroporin activity. Functionally, binds to host cell surface receptors and mediates fusion between viral and cellular membranes. Efficient virus attachment to cell is, at least in part, mediated by host HAVCR1 in a cell-type specific manner. In addition, host NCAM1 can also be used as entry receptor. Interaction with host HSPA5 plays an important role in the early stages of infection as well. Envelope protein is synthesized in the endoplasmic reticulum and forms a heterodimer with protein prM. The heterodimer plays a role in virion budding in the ER, and the newly formed immature particle is covered with 60 spikes composed of heterodimers between precursor prM and envelope protein E. The virion is transported to the Golgi apparatus where the low pH causes the dissociation of PrM-E heterodimers and formation of E homodimers. PrM-E cleavage is inefficient, many virions are only partially matured and immature prM-E proteins could play a role in immune evasion. Its function is as follows. Plays a role in the inhibition of host RLR-induced interferon-beta activation by targeting TANK-binding kinase 1/TBK1. In addition, recruits the host deubiquitinase USP8 to cleave 'Lys-11'-linked polyubiquitin chains from caspase-1/CASP1 thus inhibiting its proteasomal degradation. In turn, stabilized CASP1 promotes cleavage of cGAS, which inhibits its ability to recognize mitochondrial DNA release and initiate type I interferon signaling. Component of the viral RNA replication complex that recruits genomic RNA, the structural protein prM/E complex, and the NS2B/NS3 protease complex to the virion assembly site and orchestrates virus morphogenesis. Also antagonizes the host alpha/beta interferon antiviral response. May disrupt adherens junction formation and thereby impair proliferation of radial cells in the host cortex. In terms of biological role, required cofactor for the serine protease function of NS3. Functionally, displays three enzymatic activities: serine protease, NTPase and RNA helicase. NS3 serine protease, in association with NS2B, performs its autocleavage and cleaves the polyprotein at dibasic sites in the cytoplasm: C-prM, NS2A-NS2B, NS2B-NS3, NS3-NS4A, NS4A-2K and NS4B-NS5. NS3 RNA helicase binds RNA and unwinds dsRNA in the 3' to 5' direction. Leads to translation arrest when expressed ex vivo. Disrupts host centrosome organization in a CEP63-dependent manner to degrade host TBK1 and inhibits innate immune response. Inhibits the integrated stress response (ISR) in the infected cell. Its function is as follows. Regulates the ATPase activity of the NS3 helicase activity. NS4A allows NS3 helicase to conserve energy during unwinding. Cooperatively with NS4B suppresses the Akt-mTOR pathway and leads to cellular dysregulation. By inhibiting host ANKLE2 functions, may cause defects in brain development, such as microcephaly. Also antagonizes the host MDA5-mediated induction of alpha/beta interferon antiviral response. Leads to translation arrest when expressed ex vivo. Inhibits the integrated stress response (ISR) in the infected cell. Functions as a signal peptide for NS4B and is required for the interferon antagonism activity of the latter. In terms of biological role, induces the formation of ER-derived membrane vesicles where the viral replication takes place. Also plays a role in the inhibition of host RLR-induced interferon-beta production at TANK-binding kinase 1/TBK1 level. Cooperatively with NS4A suppresses the Akt-mTOR pathway and leads to cellular dysregulation. Functionally, replicates the viral (+) and (-) RNA genome, and performs the capping of genomes in the cytoplasm. Methylates viral RNA cap at guanine N-7 and ribose 2'-O positions. Once sufficient NS5 is expressed, binds to the cap-proximal structure and inhibits further translation of the viral genome. Besides its role in RNA genome replication, also prevents the establishment of a cellular antiviral state by blocking the interferon-alpha/beta (IFN-alpha/beta) signaling pathway. Mechanistically, interferes with host kinases TBK1 and IKKE upstream of interferon regulatory factor 3/IRF3 to inhibit the RIG-I pathway. Also antagonizes type I interferon signaling by targeting STAT2 for degradation by the proteasome thereby preventing activation of JAK-STAT signaling pathway. Mechanistically, acts as a scaffold protein to connect host ZSWIM8/CUL3 ligase complex and STAT2, leading to STAT2 degradation. Within the host nucleus, disrupts host SUMO1 and STAT2 co-localization with PML, resulting in PML degradation. May also reduce immune responses by preventing the recruitment of the host PAF1 complex to interferon-responsive genes. In Zika virus (isolate ZIKV/Human/Cambodia/FSS13025/2010) (ZIKV), this protein is Genome polyprotein.